The chain runs to 575 residues: Sodium/hydrogen exchanger 8 (575 aa).

The next 11 membrane-spanning stretches (helical) occupy residues 54–74, 78–98, 117–137, 150–170, 185–205, 255–275, 305–325, 348–368, 373–393, 411–431, and 445–465; these read MTIF…HLLI, LHFL…GAVI, PNMF…YSLH, LFAV…IYFL, FAFG…IFNA, LGYF…TGLI, GLAE…GIVM, VAFL…FSFP, ISFV…NIFP, MFIM…SLHL, and TTII…MPLI. T504 carries the phosphothreonine modification. A phosphoserine mark is found at S565 and S567.

It belongs to the monovalent cation:proton antiporter 1 (CPA1) transporter (TC 2.A.36) family. Intestine and kidneys.

It localises to the golgi apparatus membrane. Its subcellular location is the golgi apparatus. The protein localises to the trans-Golgi network membrane. It is found in the endosome. The protein resides in the multivesicular body membrane. It localises to the apical cell membrane. Its subcellular location is the cytoplasmic vesicle. The protein localises to the secretory vesicle. It is found in the acrosome. The enzyme catalyses Na(+)(in) + H(+)(out) = Na(+)(out) + H(+)(in). Its activity is regulated as follows. Expression and activity are regulated by acid media by increasing the rate of trafficking to the apical membrane. Inhibited by HOE694 and S3226. In terms of biological role, na(+)/H(+) antiporter. Mediates the electoneutral exchange of intracellular H(+) ions for extracellular Na(+) in 1:1 stoichiometry. Acts as an Na(+)/H(+) exchanger in the trans-Golgi. Contributes to the regulation of pH regulation of Golgi apparatus, and consequently, in protein trafficking and endosomal morphology. In germ cells, plays a crucial role in acrosome biogenesis and sperm development, probably by playing a role in the fusion of the Golgi-derived vesicles that form the acrosomal cap. Can also be active at the cell surface of specialized cells. In the small intestine, at the cell membrane, plays a major physiological role in transepithelial absorption of Na(+) and regulates intracellular pH homeostasis of intestinal epithelial cells. Acts as an important regulator of mucosal integrity in the intestine and in the stomach, could mediate the pH fluctuation necessary for mucin exocytosis or assist membrane trafficking of other proteins. Plays a role in photoreceptor survival and in the maintenance of intracellular pH homeostasis in retinal pigment epithelium (RPE cells). This chain is Sodium/hydrogen exchanger 8 (Slc9a8), found in Rattus norvegicus (Rat).